Consider the following 372-residue polypeptide: Chaperone protein DnaJ (372 aa).

In terms of domain architecture, J spans 5–70 (DYYDLLEVGR…EKRAGYDRYG (66 aa)). The CR-type zinc finger occupies 134 to 212 (GIQAPIHYVT…CGGSGRRRDE (79 aa)). Positions 147, 150, 164, 167, 186, 189, 200, and 203 each coordinate Zn(2+). CXXCXGXG motif repeat units lie at residues 147–154 (CDTCQGTG), 164–171 (CHTCQGSG), 186–193 (CTTCYGEG), and 200–207 (CKKCGGSG).

It belongs to the DnaJ family. In terms of assembly, homodimer. Requires Zn(2+) as cofactor.

Its subcellular location is the cytoplasm. Its function is as follows. Participates actively in the response to hyperosmotic and heat shock by preventing the aggregation of stress-denatured proteins and by disaggregating proteins, also in an autonomous, DnaK-independent fashion. Unfolded proteins bind initially to DnaJ; upon interaction with the DnaJ-bound protein, DnaK hydrolyzes its bound ATP, resulting in the formation of a stable complex. GrpE releases ADP from DnaK; ATP binding to DnaK triggers the release of the substrate protein, thus completing the reaction cycle. Several rounds of ATP-dependent interactions between DnaJ, DnaK and GrpE are required for fully efficient folding. Also involved, together with DnaK and GrpE, in the DNA replication of plasmids through activation of initiation proteins. The protein is Chaperone protein DnaJ of Wolbachia pipientis wMel.